A 703-amino-acid chain; its full sequence is Polyribonucleotide nucleotidyltransferase (703 aa).

Mg(2+) is bound by residues D485 and D491. Residues 552–611 form the KH domain; the sequence is PRAYTINIDTDKIRTLIGTGGKTINKIIEETGVKIDIREDGTVFVLSSDADSANRALKMI. Residues 621–689 form the S1 motif domain; the sequence is GEVYLGKVTK…NQGRVNLSRK (69 aa).

This sequence belongs to the polyribonucleotide nucleotidyltransferase family. It depends on Mg(2+) as a cofactor.

The protein localises to the cytoplasm. The enzyme catalyses RNA(n+1) + phosphate = RNA(n) + a ribonucleoside 5'-diphosphate. In terms of biological role, involved in mRNA degradation. Catalyzes the phosphorolysis of single-stranded polyribonucleotides processively in the 3'- to 5'-direction. This Clostridium acetobutylicum (strain ATCC 824 / DSM 792 / JCM 1419 / IAM 19013 / LMG 5710 / NBRC 13948 / NRRL B-527 / VKM B-1787 / 2291 / W) protein is Polyribonucleotide nucleotidyltransferase.